The following is a 213-amino-acid chain: Isomeliandiol synthase MOI2 (213 aa).

The next 5 helical transmembrane spans lie at 18–38, 52–72, 109–129, 137–157, and 171–191; these read AALH…SWFI, VLCW…YYVF, IESM…YALA, ILQF…FLSA, and YWAY…LIAI. Residues 48–190 form the EXPERA domain; it reads MDRVVLCWWA…IWVIVPALIA (143 aa).

Belongs to the EBP family. Mainly expressed in petioles.

The protein resides in the membrane. The catalysed reaction is 7,8-epoxymelianol = isomeliandiol. Its pathway is secondary metabolite biosynthesis; terpenoid biosynthesis. Its function is as follows. Isomerase involved in the biosynthesis of limonoids triterpene natural products such as azadirachtin, an antifeedant widely used as bioinsecticide, and possessing many medicinal applications including anti-tumoral, anti-malarial, anti-rheumatic, antibacterial, anti-inflammatory, anti-pyretic and diuretic effects. Catalyzes the conversion of 7,8-epoxymelianol to isomeliandiol via skeletal rearrangements. In Melia azedarach (Chinaberry tree), this protein is Isomeliandiol synthase MOI2.